The sequence spans 635 residues: Threonine--tRNA ligase (635 aa).

The region spanning 1–62 (MITITLPDGS…EHDAMLRIIT (62 aa)) is the TGS domain. The tract at residues 244–535 (DHRKIGKVQD…LIEHYAGIWP (292 aa)) is catalytic. 3 residues coordinate Zn(2+): cysteine 335, histidine 386, and histidine 512.

The protein belongs to the class-II aminoacyl-tRNA synthetase family. In terms of assembly, homodimer. The cofactor is Zn(2+).

Its subcellular location is the cytoplasm. The catalysed reaction is tRNA(Thr) + L-threonine + ATP = L-threonyl-tRNA(Thr) + AMP + diphosphate + H(+). In terms of biological role, catalyzes the attachment of threonine to tRNA(Thr) in a two-step reaction: L-threonine is first activated by ATP to form Thr-AMP and then transferred to the acceptor end of tRNA(Thr). Also edits incorrectly charged L-seryl-tRNA(Thr). This chain is Threonine--tRNA ligase, found in Xylella fastidiosa (strain 9a5c).